The primary structure comprises 401 residues: Argininosuccinate synthase (401 aa).

ATP contacts are provided by residues 9–17 (AYSGGLDTS) and alanine 36. Residues tyrosine 87 and serine 92 each contribute to the L-citrulline site. Residue glycine 117 participates in ATP binding. L-aspartate-binding residues include threonine 119, asparagine 123, and aspartate 124. Asparagine 123 provides a ligand contact to L-citrulline. 5 residues coordinate L-citrulline: arginine 127, serine 176, serine 185, glutamate 261, and tyrosine 273.

Belongs to the argininosuccinate synthase family. Type 1 subfamily. As to quaternary structure, homotetramer.

The protein resides in the cytoplasm. The enzyme catalyses L-citrulline + L-aspartate + ATP = 2-(N(omega)-L-arginino)succinate + AMP + diphosphate + H(+). It participates in amino-acid biosynthesis; L-arginine biosynthesis; L-arginine from L-ornithine and carbamoyl phosphate: step 2/3. The polypeptide is Argininosuccinate synthase (Syntrophobacter fumaroxidans (strain DSM 10017 / MPOB)).